We begin with the raw amino-acid sequence, 356 residues long: uncharacterized protein (356 aa).

37-44 (TGASSGIG) serves as a coordination point for NADP(+). S168 contributes to the substrate binding site. The active-site Proton acceptor is Y181.

This sequence belongs to the short-chain dehydrogenases/reductases (SDR) family.

This is an uncharacterized protein from Bacillus subtilis (strain 168).